The chain runs to 266 residues: Translation initiation factor 2 subunit alpha (266 aa).

The S1 motif domain occupies 10 to 81 (GELVVGKIDE…SAQQIDLSIK (72 aa)). The tract at residues 233–266 (AEDALEESADRAAKVVEQHGGSGQFHRERSEDDE) is disordered. Composition is skewed to basic and acidic residues over residues 240 to 249 (SADRAAKVVE) and 257 to 266 (FHRERSEDDE).

This sequence belongs to the eIF-2-alpha family. Heterotrimer composed of an alpha, a beta and a gamma chain.

In terms of biological role, eIF-2 functions in the early steps of protein synthesis by forming a ternary complex with GTP and initiator tRNA. The protein is Translation initiation factor 2 subunit alpha of Haloarcula marismortui (strain ATCC 43049 / DSM 3752 / JCM 8966 / VKM B-1809) (Halobacterium marismortui).